The following is a 153-amino-acid chain: Arachidonate 5-lipoxygenase-activating protein (153 aa).

Topologically, residues 1 to 8 (MDQEAMGN) are lumenal. The helical transmembrane segment at 9 to 30 (IVLLAIVTLISVVQNAFFAHKV) threads the bilayer. Residues 31 to 52 (EHESKTHNGRSFQRTGTPAFER) are Cytoplasmic-facing. The chain crosses the membrane as a helical span at residues 53-77 (VYTANQNCVDAYPTFLVVLWSAGLF). The Lumenal portion of the chain corresponds to 78 to 80 (CSQ). A helical transmembrane segment spans residues 81 to 102 (VPAAFAGLMYLFVRQKYFVGYL). The Cytoplasmic segment spans residues 103 to 107 (GERTQ). The stretch at 108–115 (STPGYIFG) is an intramembrane region. A helical transmembrane segment spans residues 116–128 (KRIILFLFLMSLA). Topologically, residues 129 to 153 (GIFNYFLILFFGSDFENYIKTITTT) are lumenal.

The protein belongs to the MAPEG family. As to quaternary structure, homotrimer. Interacts with LTC4S and ALOX5.

The protein resides in the nucleus membrane. It is found in the endoplasmic reticulum membrane. Required for leukotriene biosynthesis by ALOX5 (5-lipoxygenase). Anchors ALOX5 to the membrane. Binds arachidonic acid, and could play an essential role in the transfer of arachidonic acid to ALOX5. Binds to MK-886, a compound that blocks the biosynthesis of leukotrienes. This Sus scrofa (Pig) protein is Arachidonate 5-lipoxygenase-activating protein (ALOX5AP).